The following is a 217-amino-acid chain: Somatotropin (217 aa).

Residues 1–26 (MAPGSWFSPLFIAVITLGLQWPKEAA) form the signal peptide. Histidine 46 contacts Zn(2+). Cysteine 79 and cysteine 190 are oxidised to a cystine. Position 199 (glutamate 199) interacts with Zn(2+). A disulfide bridge links cysteine 207 with cysteine 215.

The protein belongs to the somatotropin/prolactin family.

It localises to the secreted. Its function is as follows. Growth hormone plays an important role in growth control. This chain is Somatotropin (GH), found in Struthio camelus (Common ostrich).